The primary structure comprises 313 residues: PDCD10 and GCKIII kinases-associated protein 1 (313 aa).

A disordered region spans residues 40 to 89 (RLKGTQNSEVEVPRNALHDGSLSNSESRGSTTGLPHQGPLPQEDSEERPC). S60 and S64 each carry phosphoserine. The span at 60 to 73 (SLSNSESRGSTTGL) shows a compositional bias: polar residues. Position 104 is a phosphothreonine (T104). Phosphoserine occurs at positions 107, 237, and 240. Residues 253-286 (YFKEEGPTHPTPAADSGSEREDPHTYNGDREGVV) are disordered. The span at 269–285 (GSEREDPHTYNGDREGV) shows a compositional bias: basic and acidic residues.

As to quaternary structure, interacts with KEAP1; this interaction prevents the ubiquitination of KEAP1 by TRIM25, thus protecting KEAP1 from degradation. Found in association with PDCD10 and members of the STE20 kinases, such as STK24, STK25 and STK26.

The protein localises to the cell membrane. Acts as a tumor suppressor. Acts as a tumor suppressor for colorectal cancer cell proliferation by targeting KEAP1/USP17/ELK1/CDK6 axis. The polypeptide is PDCD10 and GCKIII kinases-associated protein 1 (Mus musculus (Mouse)).